Reading from the N-terminus, the 202-residue chain is Small ribosomal subunit protein uS4 (202 aa).

Residues 94-157 (SRLDNLVYRM…KDLPIVAAGA (64 aa)) form the S4 RNA-binding domain.

Belongs to the universal ribosomal protein uS4 family. As to quaternary structure, part of the 30S ribosomal subunit. Contacts protein S5. The interaction surface between S4 and S5 is involved in control of translational fidelity.

Functionally, one of the primary rRNA binding proteins, it binds directly to 16S rRNA where it nucleates assembly of the body of the 30S subunit. With S5 and S12 plays an important role in translational accuracy. The protein is Small ribosomal subunit protein uS4 of Malacoplasma penetrans (strain HF-2) (Mycoplasma penetrans).